A 530-amino-acid chain; its full sequence is Alpha-(1,3)-fucosyltransferase 4 (530 aa).

2 disordered regions span residues 1–48 (MRRL…RAVP) and 66–113 (HLGG…TPAD). Topologically, residues 1-147 (MRRLWGAARK…GGRRRWRRGR (147 aa)) are cytoplasmic. Residues 88–106 (ASGERQRRLEPQLQHESRC) are compositionally biased toward basic and acidic residues. The chain crosses the membrane as a helical; Signal-anchor for type II membrane protein span at residues 148 to 172 (GLPWTVCVLAAAGLTCTALITYACW). Topologically, residues 173 to 530 (GQLPPLPWAS…IRNLASWFER (358 aa)) are lumenal. N-linked (GlcNAc...) asparagine glycans are attached at residues Asn-216 and Asn-315.

Belongs to the glycosyltransferase 10 family.

It localises to the golgi apparatus. It is found in the golgi stack membrane. It carries out the reaction a beta-D-galactosyl-(1-&gt;4)-N-acetyl-beta-D-glucosaminyl derivative + GDP-beta-L-fucose = a beta-D-galactosyl-(1-&gt;4)-[alpha-L-fucosyl-(1-&gt;3)]-N-acetyl-beta-D-glucosaminyl derivative + GDP + H(+). The catalysed reaction is an N-acetyl-alpha-neuraminyl-(2-&gt;3)-beta-D-galactosyl-(1-&gt;4)-N-acetyl-beta-D-glucosaminyl derivative + GDP-beta-L-fucose = an alpha-Neu5Ac-(2-&gt;3)-beta-D-Gal-(1-&gt;4)-[alpha-L-Fuc-(1-&gt;3)]-beta-D-GlcNAc derivative + GDP + H(+). The enzyme catalyses an alpha-Neu5Ac-(2-&gt;3)-beta-D-Gal-(1-&gt;4)-beta-D-GlcNAc-(1-&gt;3)-beta-D-Gal-(1-&gt;4)-beta-D-GlcNAc derivative + GDP-beta-L-fucose = an alpha-Neu5Ac-(2-&gt;3)-beta-D-Gal-(1-&gt;4)-beta-D-GlcNAc-(1-&gt;3)-beta-D-Gal-(1-&gt;4)-[alpha-L-Fuc-(1-&gt;3)]-beta-D-GlcNAc derivative + GDP + H(+). It catalyses the reaction an alpha-Neu5Ac-(2-&gt;3)-beta-D-Gal-(1-&gt;4)-beta-D-GlcNAc6S derivative + GDP-beta-L-fucose = an alpha-Neu5Ac-(2-&gt;3)-beta-D-Gal-(1-&gt;4)-[alpha-L-Fuc-(1-&gt;3)]-beta-D-GlcNAc6S derivative + GDP + H(+). Its pathway is protein modification; protein glycosylation. In terms of biological role, catalyzes alpha(1-&gt;3) linkage of fucosyl moiety transferred from GDP-beta-L-fucose to N-acetyl glucosamine (GlcNAc) within type 2 lactosamine (LacNAc, Gal-beta(1-&gt;4)GlcNAc) glycan attached to N- or O-linked glycoproteins. Robustly fucosylates nonsialylated distal LacNAc unit of the polylactosamine chain to form Lewis X antigen (CD15), a glycan determinant known to mediate important cellular functions in development and immunity. Fucosylates with lower efficiency sialylated LacNAc acceptors to form sialyl Lewis X and 6-sulfo sialyl Lewis X determinants that serve as recognition epitopes for C-type lectins. Together with FUT7 contributes to SELE, SELL and SELP selectin ligand biosynthesis and selectin-dependent lymphocyte homing, leukocyte migration and blood leukocyte homeostasis. In a cell type specific manner, may also fucosylate the internal LacNAc unit of the polylactosamine chain to form VIM-2 antigen that serves as recognition epitope for SELE. In Pan troglodytes (Chimpanzee), this protein is Alpha-(1,3)-fucosyltransferase 4 (FUT4).